The primary structure comprises 494 residues: GTPase Der (494 aa).

EngA-type G domains lie at 2–164 (KKIA…PEED) and 235–407 (IKIS…KNYS). GTP contacts are provided by residues 8 to 15 (GRPNVGKS), 55 to 59 (DTGGL), 116 to 119 (NKID), 241 to 248 (GRTNVGKS), 288 to 292 (DTAGL), and 352 to 355 (NKWD). The 85-residue stretch at 408–492 (QHIKTSELNV…PVLFKAKKRG (85 aa)) folds into the KH-like domain.

It belongs to the TRAFAC class TrmE-Era-EngA-EngB-Septin-like GTPase superfamily. EngA (Der) GTPase family. As to quaternary structure, associates with the 50S ribosomal subunit.

In terms of biological role, GTPase that plays an essential role in the late steps of ribosome biogenesis. The polypeptide is GTPase Der (Sulfurimonas denitrificans (strain ATCC 33889 / DSM 1251) (Thiomicrospira denitrificans (strain ATCC 33889 / DSM 1251))).